A 959-amino-acid polypeptide reads, in one-letter code: Glycine dehydrogenase (decarboxylating) (959 aa).

Lysine 708 carries the N6-(pyridoxal phosphate)lysine modification.

This sequence belongs to the GcvP family. As to quaternary structure, the glycine cleavage system is composed of four proteins: P, T, L and H. Pyridoxal 5'-phosphate serves as cofactor.

It carries out the reaction N(6)-[(R)-lipoyl]-L-lysyl-[glycine-cleavage complex H protein] + glycine + H(+) = N(6)-[(R)-S(8)-aminomethyldihydrolipoyl]-L-lysyl-[glycine-cleavage complex H protein] + CO2. In terms of biological role, the glycine cleavage system catalyzes the degradation of glycine. The P protein binds the alpha-amino group of glycine through its pyridoxal phosphate cofactor; CO(2) is released and the remaining methylamine moiety is then transferred to the lipoamide cofactor of the H protein. The chain is Glycine dehydrogenase (decarboxylating) from Yersinia enterocolitica serotype O:8 / biotype 1B (strain NCTC 13174 / 8081).